Reading from the N-terminus, the 192-residue chain is UPF0312 protein PputGB1_5030 (192 aa).

Residues 1-23 (MLKKTFAALALGTALLSAGQAMA) form the signal peptide.

Belongs to the UPF0312 family. Type 1 subfamily.

The protein localises to the periplasm. This is UPF0312 protein PputGB1_5030 from Pseudomonas putida (strain GB-1).